The following is a 478-amino-acid chain: Early growth response protein 4 (478 aa).

The segment at 15-37 (SKPTEGCAHTSPELPRLPARDAP) is disordered. 3 C2H2-type zinc fingers span residues 372-396 (FACPVESCVRTFARSDELNRHLRIH), 402-424 (FQCRICLRNFSRSDHLTTHVRTH), and 430-452 (FACDVCGRRFARSDEKKRHSKVH).

It belongs to the EGR C2H2-type zinc-finger protein family.

The protein resides in the nucleus. Functionally, transcriptional regulator. Recognizes and binds to the DNA sequence 5'-GCGGGGGCG-3' (GSG). Activates the transcription of target genes whose products are required for mitogenesis and differentiation. The polypeptide is Early growth response protein 4 (Egr4) (Rattus norvegicus (Rat)).